The sequence spans 464 residues: Neuronal acetylcholine receptor subunit beta-3 (464 aa).

An N-terminal signal peptide occupies residues 1–30; it reads MTGFLRVFLVLSATLSGSWVTLTATAGLSS. Residues 31–238 lie on the Extracellular side of the membrane; sequence VAEHEDALLR…VTYSFVLRRL (208 aa). Asparagine 55 and asparagine 172 each carry an N-linked (GlcNAc...) asparagine glycan. The cysteines at positions 159 and 173 are disulfide-linked. The next 3 membrane-spanning stretches (helical) occupy residues 239–263, 271–288, and 305–326; these read PLFY…VFYL, LSLS…LLVI, and YLLF…VINV. Over 327-434 the chain is Cytoplasmic; it reads HHRSSSTYHP…WKFVAQVLDR (108 aa). A helical membrane pass occupies residues 435–453; it reads IFLWLFLIASVLGSILIFI.

This sequence belongs to the ligand-gated ion channel (TC 1.A.9) family. Acetylcholine receptor (TC 1.A.9.1) subfamily. Beta-3/CHRNB3 sub-subfamily. In terms of assembly, neuronal AChR seems to be composed of two different type of subunits: alpha and beta. CHRNB3/beta-3 subunit is only able to form functional nAChRs when co-assembled with another beta subunit. Participates in pentameric assemblies along with CHRNA4/alpha-4 and CHRNB2/beta-2 subunits and with CHRNA6/alpha-6 as well, forming stoichiometries such as (CHRNA3:CHRNB4)2:CHRNB3, (CHRNA4:CHRNB2)2:CHRNB3 or (CHRNA6:CHRNB2)2:CHRNB3.

The protein resides in the synaptic cell membrane. It localises to the cell membrane. The enzyme catalyses Ca(2+)(in) = Ca(2+)(out). It carries out the reaction K(+)(in) = K(+)(out). It catalyses the reaction Na(+)(in) = Na(+)(out). Activated by a myriad of ligands such as acetylcholine, cytisine, nicotine, choline and epibatidine. Component of neuronal acetylcholine receptors (nAChRs) that function as pentameric, ligand-gated cation channels with high calcium permeability among other activities. nAChRs are excitatory neurotrasnmitter receptors formed by a collection of nAChR subunits known to mediate synaptic transmission in the nervous system and the neuromuscular junction. Each nAchR subunit confers differential attributes to channel properties, including activation, deactivation and desensitization kinetics, pH sensitivity, cation permeability, and binding to allosteric modulators. Has an accessory rather than functional role and is only able to form functional nAChRs when co-assembled with another beta subunit. Participates in pentameric assemblies along with CHRNA3, CHRNA4, CHRNA6, CHRNB2 and CHRNB4. Modulates receptor assembly and increases receptor sensitivity to nicotine when associated with CHRNB2, CHRNA4 and/or CHRNA6 as well as CHRNA3 and CHRNB4. Seems to play a role in nicotine addiction. This chain is Neuronal acetylcholine receptor subunit beta-3 (Chrnb3), found in Rattus norvegicus (Rat).